Here is a 262-residue protein sequence, read N- to C-terminus: F-actin-capping protein subunit alpha (262 aa).

Belongs to the F-actin-capping protein alpha subunit family. Heterodimer of an alpha and a beta subunit.

Functionally, F-actin-capping proteins bind in a Ca(2+)-independent manner to the fast growing ends of actin filaments (barbed end) thereby blocking the exchange of subunits at these ends. Unlike other capping proteins (such as gelsolin and severin), these proteins do not sever actin filaments. The chain is F-actin-capping protein subunit alpha (CAP1) from Kluyveromyces lactis (strain ATCC 8585 / CBS 2359 / DSM 70799 / NBRC 1267 / NRRL Y-1140 / WM37) (Yeast).